The following is a 568-amino-acid chain: Protein AF-9 (568 aa).

A YEATS domain is found at 1-138 (MASSCAVQVK…EDFRRKLLKA (138 aa)). 2 histone H3K9cr binding regions span residues 78-80 (YAG) and 106-108 (LHL). The tract at residues 138 to 475 (AGGDPNRSIH…PPPPLLKTNN (338 aa)) is disordered. Residues 149–190 (SSSSSSSSSSSSSSSSSSSSSSSSSSSSSSSSSSSSSSSSSS) show a composition bias toward low complexity. Residues 202–265 (EHKEKPSKDS…PKPMSKEPKP (64 aa)) show a composition bias toward basic and acidic residues. A phosphoserine mark is found at S288 and S294. A Nuclear localization signal motif is present at residues 295-300 (AKKRKK). The segment covering 303 to 313 (SEALFKSFSSA) has biased composition (low complexity). A compositionally biased stretch (basic and acidic residues) spans 322-349 (ADKKQIKDKSHVKMGKVKIESETSEKKK). A Glycyl lysine isopeptide (Lys-Gly) (interchain with G-Cter in SUMO2) cross-link involves residue K339. Residues 357–368 (DIVDPNDSDVEE) are compositionally biased toward acidic residues. Residues 371–395 (SSKSDSEQPSPASSSSSSSSSFTPS) are compositionally biased toward low complexity. Phosphoserine is present on residues S412 and S419. Over residues 414-429 (DNEEESDEVEDNDNDS) the composition is skewed to acidic residues. The segment covering 445–461 (VSLSDGSDSESSSASSP) has biased composition (low complexity). Phosphoserine is present on S483.

In terms of assembly, component of the super elongation complex (SEC), at least composed of EAF1, EAF2, CDK9, MLLT3/AF9, AFF (AFF1 or AFF4), the P-TEFb complex and ELL (ELL, ELL2 or ELL3). Interacts with BCOR. Interacts with CBX8. Interacts with ALKBH4. Enriched in undifferentiated hematopoietic stem cells in fetal liver, cord blood and bone marrow.

The protein resides in the nucleus. Its subcellular location is the chromosome. With respect to regulation, crotonylated lysine binding is strongly inhibited by the peptide XL-07i, carrying a 2-furancarbonyl side chain and capped with a hydrophobic carboxybenzyl group. XL-07i targets the unique pi-pi-pi stacking interaction at the crotonylation recognition site. In terms of biological role, chromatin reader component of the super elongation complex (SEC), a complex required to increase the catalytic rate of RNA polymerase II transcription by suppressing transient pausing by the polymerase at multiple sites along the DNA. Specifically recognizes and binds acylated histone H3, with a preference for histone H3 that is crotonylated. Crotonylation marks active promoters and enhancers and confers resistance to transcriptional repressors. Recognizes and binds histone H3 crotonylated at 'Lys-9' (H3K9cr), and with slightly lower affinity histone H3 crotonylated at 'Lys-18' (H3K18cr). Also recognizes and binds histone H3 acetylated and butyrylated at 'Lys-9' (H3K9ac and H3K9bu, respectively), but with lower affinity than crotonylated histone H3. In the SEC complex, MLLT3 is required to recruit the complex to crotonylated histones. Recruitment of the SEC complex to crotonylated histones promotes recruitment of DOT1L on active chromatin to deposit histone H3 'Lys-79' methylation (H3K79me). Plays a key role in hematopoietic stem cell (HSC) maintenance by preserving, rather than conferring, HSC stemness. Acts by binding to the transcription start site of active genes in HSCs and sustaining level of H3K79me2, probably by recruiting DOT1L. This is Protein AF-9 from Homo sapiens (Human).